Here is a 138-residue protein sequence, read N- to C-terminus: Acidic phospholipase A2 Cvv-E6f (138 aa).

The N-terminal stretch at 1–16 (MRTLWIVAVLLLGVEG) is a signal peptide. 7 cysteine pairs are disulfide-bonded: cysteine 42–cysteine 131, cysteine 44–cysteine 60, cysteine 59–cysteine 111, cysteine 65–cysteine 138, cysteine 66–cysteine 104, cysteine 73–cysteine 97, and cysteine 91–cysteine 102. Ca(2+)-binding residues include tyrosine 43, glycine 45, and glycine 47. The active site involves histidine 63. Residue aspartate 64 participates in Ca(2+) binding. Residue aspartate 105 is part of the active site.

It depends on Ca(2+) as a cofactor. Expressed by the venom gland.

Its subcellular location is the secreted. The enzyme catalyses a 1,2-diacyl-sn-glycero-3-phosphocholine + H2O = a 1-acyl-sn-glycero-3-phosphocholine + a fatty acid + H(+). Functionally, snake venom phospholipase A2 (PLA2) that shows very low inhibition of ADP-induced platelet aggregation in platelet-rich plasma of human, rabbit and guinea pig. In vivo, shows efficient edema-inducing activities in rat paws. PLA2 catalyzes the calcium-dependent hydrolysis of the 2-acyl groups in 3-sn-phosphoglycerides. The chain is Acidic phospholipase A2 Cvv-E6f from Crotalus viridis viridis (Prairie rattlesnake).